The chain runs to 298 residues: Probable GTP 3',8-cyclase (298 aa).

The Radical SAM core domain maps to 4–227; sequence RYGREIRSFR…MQNRKKYLID (224 aa). GTP is bound at residue Arg-13. Residues Cys-20 and Cys-24 each contribute to the [4Fe-4S] cluster site. Residue Tyr-26 participates in S-adenosyl-L-methionine binding. Cys-27 lines the [4Fe-4S] cluster pocket. Lys-61 serves as a coordination point for GTP. Residue Gly-65 coordinates S-adenosyl-L-methionine. Residue Thr-91 coordinates GTP. Residue Ser-115 participates in S-adenosyl-L-methionine binding. Residue Lys-152 participates in GTP binding. [4Fe-4S] cluster contacts are provided by Cys-243 and Cys-246. Position 248-250 (248-250) interacts with GTP; the sequence is RIR. Cys-260 contacts [4Fe-4S] cluster.

The protein belongs to the radical SAM superfamily. MoaA family. [4Fe-4S] cluster is required as a cofactor.

The catalysed reaction is GTP + AH2 + S-adenosyl-L-methionine = (8S)-3',8-cyclo-7,8-dihydroguanosine 5'-triphosphate + 5'-deoxyadenosine + L-methionine + A + H(+). Its pathway is cofactor biosynthesis; molybdopterin biosynthesis. Catalyzes the cyclization of GTP to (8S)-3',8-cyclo-7,8-dihydroguanosine 5'-triphosphate. This chain is Probable GTP 3',8-cyclase, found in Methanococcus maripaludis (strain C5 / ATCC BAA-1333).